We begin with the raw amino-acid sequence, 418 residues long: MGNITKRGSRDFAADSAVLLEGSLATALHSRLYEAIIKEDCDTIRTLLRNHPVNQPLTLLASSTGYRFLSQQTQPIFPIHLAAEYRKPQSLLCLLQHGADPEVRDAQGLTTLHLMLLNWPVTSTTWTKPSTRIQKILTDIQNNAVLCLRILCDHGAQVNARVDNSNKHSPLHLAITYGTYPVLSFLAQNGAQVNAINESSMTPLHMAADILNKNMIETLIACGANVNCAISSTGNTALKLAVCTASSKAGRLLAAGVGCIRLLLNHGAQVNAQDHEGQTALHEACFGGREVIINLLLEFEANVNILTRNGESPIYMYLQRSSNIRDVTLLARLLYRTYPLRLSNKQGALPAGIMLPEFHLLRETLIKLSKKPLTLEAICKRNIRNVYGEKYKFQLKKLLPAKLWNSIYGIYDFTYLLK.

ANK repeat units lie at residues 27 to 57 (ALHS…NQPL), 74 to 103 (QPIF…DPEV), 131 to 160 (TRIQ…QVNA), 166 to 195 (NKHS…QVNA), 199 to 228 (SSMT…NVNC), 233 to 272 (TGNT…QVNA), 276 to 305 (EGQT…NVNI), and 309 to 342 (NGES…PLRL).

The polypeptide is Ankyrin repeat domain-containing protein 61 (Ankrd61) (Rattus norvegicus (Rat)).